A 677-amino-acid chain; its full sequence is Methionine--tRNA ligase (677 aa).

The short motif at 15–25 (PYANGSIHLGH) is the 'HIGH' region element. Zn(2+) is bound by residues C146, C149, C159, and C162. Residues 333–337 (KMSKS) carry the 'KMSKS' region motif. Position 336 (K336) interacts with ATP. Residues 575-677 (DFAKVDLRVA…AGAKPGHQVK (103 aa)) enclose the tRNA-binding domain.

This sequence belongs to the class-I aminoacyl-tRNA synthetase family. MetG type 1 subfamily. As to quaternary structure, homodimer. Zn(2+) serves as cofactor.

Its subcellular location is the cytoplasm. It catalyses the reaction tRNA(Met) + L-methionine + ATP = L-methionyl-tRNA(Met) + AMP + diphosphate. In terms of biological role, is required not only for elongation of protein synthesis but also for the initiation of all mRNA translation through initiator tRNA(fMet) aminoacylation. The chain is Methionine--tRNA ligase from Escherichia coli (strain ATCC 8739 / DSM 1576 / NBRC 3972 / NCIMB 8545 / WDCM 00012 / Crooks).